The chain runs to 481 residues: Innexin inx6 (481 aa).

Topologically, residues 1 to 21 are cytoplasmic; sequence MYAAVKPLSNYLRLKTVRIYD. A helical transmembrane segment spans residues 22 to 42; the sequence is PIFTLHSKCTIVILLTCTFLL. Over 43–144 the chain is Extracellular; it reads SAKQYFGEPI…VTKRMYLRYY (102 aa). Residues 145 to 165 traverse the membrane as a helical segment; sequence QWVFMILLFQSLLFYFPSFLW. Over 166 to 220 the chain is Cytoplasmic; sequence KVWEGQRMEQLCCEVGDALIVEATYRTRLQMLTRYFRAQFAPIHWCYSIKYAFCE. The helical transmembrane segment at 221–241 threads the bilayer; it reads LLNVFISILNFWLMDVVFNGF. Residues 242–302 lie on the Extracellular side of the membrane; sequence WYKYIHALAA…VLPLNILNEK (61 aa). The chain crosses the membrane as a helical span at residues 303–323; the sequence is IFAVLYVWFLFIALLAIMNIL. Topologically, residues 324 to 481 are cytoplasmic; it reads YRLLVICCPE…MDRFFHESHA (158 aa).

Belongs to the pannexin family. In terms of tissue distribution, uniform expression in the imaginal wing disk. Expressed in an outer layer of the pupal developing CNS. Also expressed in pupal retina: cone cells and primary pigment cells.

The protein resides in the cell membrane. It localises to the cell junction. The protein localises to the gap junction. Its function is as follows. Structural components of the gap junctions. The chain is Innexin inx6 (Inx6) from Drosophila melanogaster (Fruit fly).